Consider the following 1167-residue polypeptide: C5a peptidase (1167 aa).

An N-terminal signal peptide occupies residues 1-31 (MRKKQKLPFDKLAIALMSTSILLNAQSDIKA). Over residues 34–52 (VTEDTPVTEQAVETPQPTA) the composition is skewed to polar residues. The disordered stretch occupies residues 34 to 73 (VTEDTPVTEQAVETPQPTAVSEEVPSSKETKTPQTPDDAE). Positions 99–581 (KATIRDLNDP…AGAVDAKKAS (483 aa)) constitute a Peptidase S8 domain. Residues aspartate 130, histidine 193, and serine 512 each act as charge relay system in the active site. Residues 1029-1133 (EGHSNKPEQD…RDQLPTTNDK (105 aa)) form a disordered region. 4 repeat units span residues 1034–1050 (KPEQDGSGQTPDKKPEA), 1051–1067 (KPEQDGSDQAPDKKPEA), 1068–1084 (KPEQDGSGQTPDKKPET), and 1085–1101 (KPEKDSSGQTPGKTPQK). The tract at residues 1034–1101 (KPEQDGSGQT…GQTPGKTPQK (68 aa)) is 4 X 17 AA tandem repeats. Basic and acidic residues-rich tracts occupy residues 1044–1071 (PDKKPEAKPEQDGSDQAPDKKPEAKPEQ) and 1078–1090 (PDKKPETKPEKDS). Polar residues-rich tracts occupy residues 1092–1106 (GQTPGKTPQKGQPSR) and 1120–1130 (KASTRDQLPTT). The LPXTG sorting signal signature appears at 1127 to 1131 (LPTTN). A Pentaglycyl murein peptidoglycan amidated threonine modification is found at threonine 1130. A propeptide spans 1131–1167 (NDKDTNRLHLLKLVMTTFFFGLVAHIFKTKRQKETKK) (removed by sortase).

Belongs to the peptidase S8 family. In terms of processing, cleaved by SpeB protease; leading to its degradation. Degradation by SpeB is probably strictly regulated to preserve integrity of C5a peptidase.

The protein resides in the secreted. It localises to the cell wall. The enzyme catalyses The primary cleavage site is at 67-His-|-Lys-68 in human C5a with a minor secondary cleavage site at 58-Ala-|-Ser-59.. This virulence factor of S.pyogenes specifically cleaves the human serum chemotaxin C5a at '68-Lys-|-Asp-69' bond near its C-terminus, destroying its ability to serve as a chemoattractant. The protein is C5a peptidase (scpA) of Streptococcus pyogenes.